The chain runs to 68 residues: Protein transport protein Sec61 subunit gamma (68 aa).

Residues 1–32 (MDQVMAWVEPGKQFAKDSIRLVKRCTKPDRKE) lie on the Cytoplasmic side of the membrane. Residues 33-61 (FQKIAVATAIGFAIMGFIGFFVKLIHIPI) form a helical membrane-spanning segment. Over 62–68 (NNIIVGS) the chain is Extracellular.

This sequence belongs to the SecE/SEC61-gamma family. In terms of assembly, heterotrimeric complex composed of SEC61-alpha, SEC61-beta and SEC61-gamma. Component of the ribosome-associated ER translocon complex.

It localises to the endoplasmic reticulum membrane. Its function is as follows. Necessary for protein translocation in the endoplasmic reticulum and multi-pass membrane protein biogenesis. The polypeptide is Protein transport protein Sec61 subunit gamma (SEC61G) (Ciona intestinalis (Transparent sea squirt)).